Here is a 365-residue protein sequence, read N- to C-terminus: Myocyte-specific enhancer factor 2B (365 aa).

Residues 3-57 (RKKIQISRILDQRNRQVTFTKRKFGLMKKAYELSVLCDCEIALIIFNSANRLFQY) enclose the MADS-box domain. A DNA-binding region (mef2-type) is located at residues 58–86 (ASTDMDRVLLKYTEYSEPHESRTNTDILE). Disordered stretches follow at residues 94-124 (GLDG…GDPA), 142-309 (VVYG…SPGP), and 321-365 (AGCP…KTQQ). Residues 98–108 (PELEPDEGPEE) show a composition bias toward acidic residues. Polar residues predominate over residues 223–240 (NTSRSLYSGLQNPCSTAT). Low complexity-rich tracts occupy residues 277-289 (PQSA…SLRP) and 326-346 (PTAG…SPGT). Polar residues predominate over residues 354–365 (TSLQASSEKTQQ).

This sequence belongs to the MEF2 family. In terms of assembly, interacts with HDAC7. Heterodimer. Interacts with HDAC9. As to expression, expressed in skeletal and cardiac muscle and brain.

Its subcellular location is the nucleus. Functionally, transcriptional activator which binds specifically to the MEF2 element, 5'-YTA[AT](4)TAR-3', found in numerous muscle-specific genes. Activates transcription via this element. May be involved in muscle-specific and/or growth factor-related transcription. This is Myocyte-specific enhancer factor 2B (MEF2B) from Homo sapiens (Human).